The sequence spans 160 residues: Putative UPF0479 protein YNL339W-B (160 aa).

The next 2 membrane-spanning stretches (helical) occupy residues 39-59 (IVFC…KVLQ) and 136-156 (VPMI…ISQH).

It belongs to the UPF0479 family.

The protein resides in the membrane. This chain is Putative UPF0479 protein YNL339W-B, found in Saccharomyces cerevisiae (strain ATCC 204508 / S288c) (Baker's yeast).